Reading from the N-terminus, the 311-residue chain is Acetaldehyde dehydrogenase 1 (311 aa).

Residue 11–14 (SGNI) coordinates NAD(+). The Acyl-thioester intermediate role is filled by C129. Residues 161–169 (SAGPGTRAN) and N288 contribute to the NAD(+) site.

It belongs to the acetaldehyde dehydrogenase family.

It catalyses the reaction acetaldehyde + NAD(+) + CoA = acetyl-CoA + NADH + H(+). The polypeptide is Acetaldehyde dehydrogenase 1 (Novosphingobium aromaticivorans (strain ATCC 700278 / DSM 12444 / CCUG 56034 / CIP 105152 / NBRC 16084 / F199)).